The primary structure comprises 103 residues: Protein S100-A16 (103 aa).

The region spanning 12-47 is the EF-hand 1; degenerate domain; the sequence is VIVLVENFYKYVSKYSLVKNKISKSSFREMLQKELN. Residues 54-89 enclose the EF-hand 2 domain; it reads GNRKAADKLIQNLDANHDGRISFDEYWTLIGGITGP. Ca(2+)-binding residues include D67, N69, D71, R73, and E78.

Belongs to the S-100 family. Homodimer. Interacts with TP53. As to expression, ubiquitous. Highly expressed in esophagus, adipose tissues and colon. Expressed at lower level in lung, brain, pancreas and skeletal muscle. Expression is up-regulated in tumors of bladder, lung, thyroid gland, pancreas and ovary. Expressed in astrocytes.

It is found in the nucleus. It localises to the nucleolus. The protein resides in the cytoplasm. Its function is as follows. Calcium-binding protein. Binds one calcium ion per monomer. Can promote differentiation of adipocytes (in vitro). Overexpression in preadipocytes increases their proliferation, enhances adipogenesis and reduces insulin-stimulated glucose uptake. In Homo sapiens (Human), this protein is Protein S100-A16.